We begin with the raw amino-acid sequence, 189 residues long: dCTP deaminase (189 aa).

DCTP-binding positions include 112 to 117 (KSTYAR), 136 to 138 (TLE), Gln-157, Tyr-171, and Gln-181. Catalysis depends on Glu-138, which acts as the Proton donor/acceptor.

The protein belongs to the dCTP deaminase family. As to quaternary structure, homotrimer.

It catalyses the reaction dCTP + H2O + H(+) = dUTP + NH4(+). The protein operates within pyrimidine metabolism; dUMP biosynthesis; dUMP from dCTP (dUTP route): step 1/2. Catalyzes the deamination of dCTP to dUTP. The sequence is that of dCTP deaminase from Paraburkholderia xenovorans (strain LB400).